The primary structure comprises 344 residues: GTP 3',8-cyclase (344 aa).

One can recognise a Radical SAM core domain in the interval 19–245 (PFGRAVTYLR…DIPYRTGGPA (227 aa)). A GTP-binding site is contributed by Arg-28. Cys-35 and Cys-39 together coordinate [4Fe-4S] cluster. Tyr-41 contacts S-adenosyl-L-methionine. Cys-42 is a [4Fe-4S] cluster binding site. Arg-77 contacts GTP. Gly-81 is a binding site for S-adenosyl-L-methionine. Thr-111 lines the GTP pocket. Ser-135 lines the S-adenosyl-L-methionine pocket. Lys-171 lines the GTP pocket. Position 205 (Met-205) interacts with S-adenosyl-L-methionine. The [4Fe-4S] cluster site is built by Cys-268 and Cys-271. 273–275 (RVR) contributes to the GTP binding site. Cys-285 is a [4Fe-4S] cluster binding site.

The protein belongs to the radical SAM superfamily. MoaA family. Monomer and homodimer. It depends on [4Fe-4S] cluster as a cofactor.

It carries out the reaction GTP + AH2 + S-adenosyl-L-methionine = (8S)-3',8-cyclo-7,8-dihydroguanosine 5'-triphosphate + 5'-deoxyadenosine + L-methionine + A + H(+). The protein operates within cofactor biosynthesis; molybdopterin biosynthesis. Functionally, catalyzes the cyclization of GTP to (8S)-3',8-cyclo-7,8-dihydroguanosine 5'-triphosphate. The polypeptide is GTP 3',8-cyclase (Brucella canis (strain ATCC 23365 / NCTC 10854 / RM-666)).